The sequence spans 203 residues: uncharacterized protein (203 aa).

The protein belongs to the DadA oxidoreductase family.

Its function is as follows. Either a functional dehydrogenase or a non-functional fragment. This is an uncharacterized protein from Sinorhizobium fredii (strain NBRC 101917 / NGR234).